A 366-amino-acid polypeptide reads, in one-letter code: UDP-N-acetylenolpyruvoylglucosamine reductase (366 aa).

The 175-residue stretch at 29-203 folds into the FAD-binding PCMH-type domain; it reads VGPVARTLVT…LEVEFALDAS (175 aa). Arginine 177 is an active-site residue. The active-site Proton donor is serine 258. Glutamate 358 is a catalytic residue.

Belongs to the MurB family. FAD is required as a cofactor.

The protein resides in the cytoplasm. It catalyses the reaction UDP-N-acetyl-alpha-D-muramate + NADP(+) = UDP-N-acetyl-3-O-(1-carboxyvinyl)-alpha-D-glucosamine + NADPH + H(+). Its pathway is cell wall biogenesis; peptidoglycan biosynthesis. Cell wall formation. This Mycobacterium marinum (strain ATCC BAA-535 / M) protein is UDP-N-acetylenolpyruvoylglucosamine reductase.